The primary structure comprises 733 residues: Protein OBERON 3 (733 aa).

A compositionally biased stretch (basic and acidic residues) spans Met1–Arg15. Disordered regions lie at residues Met1–Lys42 and Asn118–Asn142. Polar residues predominate over residues Pro21–Thr30. Residues Asn120–Leu153 are a coiled coil. The segment at Ser436–Lys500 adopts a PHD-type zinc-finger fold. The tract at residues Val592–Lys614 is disordered. Residues Met644–Val733 are a coiled coil.

Self-interacts. Interacts with OBE1 and OBE2. Interacts with OBE4.

Its subcellular location is the nucleus. Probable transcription factor that functions redundantly with OBE4 in specification of the hypophysis and establishment of the embryonic root. Involved in the activation of ARF5/MP-dependent gene expression during embryonic root meristem initiation. Involved in shoot meristem homeostasis. The protein is Protein OBERON 3 of Arabidopsis thaliana (Mouse-ear cress).